Consider the following 716-residue polypeptide: Probable basic-leucine zipper transcription factor O (716 aa).

The stretch at 20 to 142 forms a coiled coil; sequence LLDDFSQLQQ…YQQRQQQYQD (123 aa). Residues 173 to 233 form a disordered region; it reads SINYNMNNNN…NNKTTDNINN (61 aa). The bZIP domain occupies 381–444; it reads KSTESIKKMN…SVDLMKPSND (64 aa). A basic motif region spans residues 387-403; the sequence is KKMNQNKASRNYRQKKK. The segment at 406–413 is leucine-zipper; that stretch reads IKEIEDKL.

The protein belongs to the bZIP family.

It is found in the nucleus. In terms of biological role, probable transcriptional regulator. The chain is Probable basic-leucine zipper transcription factor O (bzpO) from Dictyostelium discoideum (Social amoeba).